The primary structure comprises 74 residues: Progonadoliberin-3 (74 aa).

Residues 1 to 15 form the signal peptide; it reads VRVVVLALVAQVTLS. Gln16 carries the post-translational modification Pyrrolidone carboxylic acid. Gly25 carries the post-translational modification Glycine amide.

This sequence belongs to the GnRH family.

The protein resides in the secreted. Stimulates the secretion of gonadotropins. The polypeptide is Progonadoliberin-3 (gnrh3) (Oncorhynchus tshawytscha (Chinook salmon)).